The primary structure comprises 390 residues: MKFVDEASILVVAGDGGNGCVSFRREKYIPKGGPDGGDGGDGGDVWMEADENLNTLIDYRFEKSFRAERGQNGASRDCTGKRGKDVTIKVPVGTRVIDQGTGETMGDMTKHGQRLLVAKGGWHGLGNTRFKSSVNRTPRQKTNGTPGDKRELLLELMLLADVGMLGMPNAGKSTFIRAVSAAKPKVADYPFTTLVPSLGVVRMDNEKSFVVADIPGLIEGAAEGAGLGIRFLKHLERCRVLLHLIDIDPIDGTDPVKNARIIISELEKYSQDLAAKPRWLVFNKIDLLDKAEAEEKAKAIAEALGWEDKYYLISAASGLGVKDLCWDVMTFIIENPVVQAEEAKQPEKVEFMWDDYHRQQLEEIAEEDDEDWDDDWDEDDEEGVEFIYKR.

The 159-residue stretch at 1–159 (MKFVDEASIL…RELLLELMLL (159 aa)) folds into the Obg domain. Positions 127–147 (NTRFKSSVNRTPRQKTNGTPG) are disordered. Residues 129 to 145 (RFKSSVNRTPRQKTNGT) show a composition bias toward polar residues. In terms of domain architecture, OBG-type G spans 160 to 333 (ADVGMLGMPN…LCWDVMTFII (174 aa)). Residues 166-173 (GMPNAGKS), 191-195 (FTTLV), 213-216 (DIPG), 283-286 (NKID), and 314-316 (SAA) each bind GTP. Residues serine 173 and threonine 193 each contribute to the Mg(2+) site.

The protein belongs to the TRAFAC class OBG-HflX-like GTPase superfamily. OBG GTPase family. Monomer. It depends on Mg(2+) as a cofactor.

It localises to the cytoplasm. Functionally, an essential GTPase which binds GTP, GDP and possibly (p)ppGpp with moderate affinity, with high nucleotide exchange rates and a fairly low GTP hydrolysis rate. Plays a role in control of the cell cycle, stress response, ribosome biogenesis and in those bacteria that undergo differentiation, in morphogenesis control. In Escherichia coli O7:K1 (strain IAI39 / ExPEC), this protein is GTPase Obg.